Reading from the N-terminus, the 57-residue chain is Potassium channel toxin alpha-KTx 26.3 (57 aa).

The signal sequence occupies residues Met1–Ser15. Residues Val16–Ser24 constitute a propeptide that is removed on maturation. 3 disulfide bridges follow: Cys30/Cys48, Cys34/Cys53, and Cys38/Cys55.

It belongs to the short scorpion toxin superfamily. Potassium channel inhibitor family. Alpha-KTx 26 subfamily. Expressed by the venom gland.

The protein localises to the secreted. Functionally, recombinant toxin that reversibly inhibits the potassium current of mKv1.3/KCNA3 channel stably expressed in COS7 cells (IC(50)=150 nM). This is Potassium channel toxin alpha-KTx 26.3 from Mesobuthus gibbosus (Mediterranean checkered scorpion).